A 289-amino-acid polypeptide reads, in one-letter code: Enoyl-CoA hydratase domain-containing protein 3, mitochondrial (289 aa).

A mitochondrion-targeting transit peptide spans 1-14; that stretch reads MLLRGFSELLKCRG.

It belongs to the enoyl-CoA hydratase/isomerase family.

It localises to the mitochondrion. Functionally, may play a role in fatty acid biosynthesis and insulin sensitivity. The polypeptide is Enoyl-CoA hydratase domain-containing protein 3, mitochondrial (echdc3) (Danio rerio (Zebrafish)).